The sequence spans 163 residues: Small heat shock protein C4 (163 aa).

A sHSP domain is found at 53 to 163 (YNNKILSPRT…QSKAKKIKIS (111 aa)).

The protein belongs to the small heat shock protein (HSP20) family.

The sequence is that of Small heat shock protein C4 (hspc4-1) from Rickettsia felis (strain ATCC VR-1525 / URRWXCal2) (Rickettsia azadi).